The following is a 333-amino-acid chain: 4-hydroxyproline epimerase (333 aa).

Residue C90 is the Proton acceptor of the active site. Residues G91–H92 and D249 each bind substrate. The active-site Proton donor is the C253. G254–T255 lines the substrate pocket.

It belongs to the proline racemase family. As to quaternary structure, homodimer.

It catalyses the reaction trans-4-hydroxy-L-proline = cis-4-hydroxy-D-proline. Allows intracellular utilization of 4-hydroxyproline, one of the major constituents of host collagen, by converting 4-hydroxy-L-proline to 4-hydroxy-D-proline, which can be further metabolized by intracellular 4-hydroxy-D-proline oxidases. Strong B-cell mitogen. Plays an important role in the regulation of intra- and extracellular amino acid pools, allowing the bacterium to profit from host precursors and enzymatic pathways. The chain is 4-hydroxyproline epimerase from Brucella suis (strain ATCC 23445 / NCTC 10510).